The following is a 220-amino-acid chain: Riboflavin kinase (220 aa).

The H-T-H motif-like stretch occupies residues 1 to 92 (METDDQYYRA…LSRILAIKNN (92 aa)). The interval 93 to 220 (VVITGTVTSG…GDRVSVEVYT (128 aa)) is riboflavin kinase. CDP is bound at residue 102-107 (GMGEGR). 2 residues coordinate Mg(2+): Thr-131 and Asn-133. Positions 188 and 195 each coordinate FMN. CDP is bound at residue 200-203 (KYLR).

This sequence belongs to the archaeal riboflavin kinase family. Requires Mg(2+) as cofactor.

The enzyme catalyses riboflavin + CTP = CDP + FMN + H(+). The protein operates within cofactor biosynthesis; FMN biosynthesis; FMN from riboflavin (CTP route): step 1/1. Its function is as follows. Catalyzes the CTP-dependent phosphorylation of riboflavin (vitamin B2) to form flavin mononucleotide (FMN). The protein is Riboflavin kinase (ribK) of Thermoplasma acidophilum (strain ATCC 25905 / DSM 1728 / JCM 9062 / NBRC 15155 / AMRC-C165).